Here is a 1123-residue protein sequence, read N- to C-terminus: Phytochrome 1 (1123 aa).

Over residues 1-15 the composition is skewed to low complexity; the sequence is MSTPKKTYSSTSSAK. Residues 1–20 form a disordered region; the sequence is MSTPKKTYSSTSSAKSKAHS. The 180-residue stretch at 216–395 folds into the GAF domain; that stretch reads DIGLLCDTVV…VFGLQLNMEV (180 aa). Position 321 (C321) interacts with phytochromobilin. 2 PAS domains span residues 610 to 681 and 744 to 815; these read VANE…LRGE and DYKT…TKFM. Residues 895 to 1115 form the Histidine kinase domain; sequence YIRQEIKNPL…VVNVELPMAQ (221 aa).

This sequence belongs to the phytochrome family. As to quaternary structure, homodimer. Post-translationally, contains one covalently linked phytochromobilin chromophore.

It localises to the cytoplasm. In terms of biological role, regulatory photoreceptor which exists in two forms that are reversibly interconvertible by light: the Pr form that absorbs maximally in the red region of the spectrum and the Pfr form that absorbs maximally in the far-red region. Photoconversion of Pr to Pfr induces an array of morphogenetic responses, whereas reconversion of Pfr to Pr cancels the induction of those responses. Pfr controls the expression of a number of nuclear genes including those encoding the small subunit of ribulose-bisphosphate carboxylase, chlorophyll A/B binding protein, protochlorophyllide reductase, rRNA, etc. It also controls the expression of its own gene(s) in a negative feedback fashion. Mediates chloroplast avoidance movement in cytoplasm. The polypeptide is Phytochrome 1 (PHY1) (Physcomitrium patens (Spreading-leaved earth moss)).